The sequence spans 105 residues: Large ribosomal subunit protein uL24 (105 aa).

The protein belongs to the universal ribosomal protein uL24 family. As to quaternary structure, part of the 50S ribosomal subunit.

Its function is as follows. One of two assembly initiator proteins, it binds directly to the 5'-end of the 23S rRNA, where it nucleates assembly of the 50S subunit. One of the proteins that surrounds the polypeptide exit tunnel on the outside of the subunit. This Cellvibrio japonicus (strain Ueda107) (Pseudomonas fluorescens subsp. cellulosa) protein is Large ribosomal subunit protein uL24.